A 120-amino-acid chain; its full sequence is MDPRKLLSCSSSYVSVRMKEEKGTIRCCSECKTTKTPMWRGGPTGPKSLCNACGIRHRKQRRSELLGIHIIRSHKSLASKKINLLSSSHGGVAVKKRRSLKEEEQAALCLLLLSCSSVLA.

The GATA-type zinc finger occupies 22–76; sequence KGTIRCCSECKTTKTPMWRGGPTGPKSLCNACGIRHRKQRRSELLGIHIIRSHKS.

The protein belongs to the type IV zinc-finger family. Class B subfamily.

The protein localises to the nucleus. In terms of biological role, transcriptional regulator that specifically binds 5'-GATA-3' or 5'-GAT-3' motifs within gene promoters. The sequence is that of GATA transcription factor 23 (GATA23) from Arabidopsis thaliana (Mouse-ear cress).